A 122-amino-acid polypeptide reads, in one-letter code: UPF0231 protein VV1_1657 (122 aa).

This sequence belongs to the UPF0231 family.

The polypeptide is UPF0231 protein VV1_1657 (Vibrio vulnificus (strain CMCP6)).